The primary structure comprises 395 residues: Zinc finger protein 385D (395 aa).

The segment at Ile80 to Ala110 adopts a Matrin-type 1 zinc-finger fold. The span at Met169 to Thr193 shows a compositional bias: polar residues. The disordered stretch occupies residues Met169–Glu194. Matrin-type zinc fingers lie at residues Leu204–Ala234 and Phe267–Gly297. Residues Leu282–Lys309 are disordered.

The protein localises to the nucleus. The sequence is that of Zinc finger protein 385D (ZNF385D) from Homo sapiens (Human).